Here is a 430-residue protein sequence, read N- to C-terminus: Adenylosuccinate synthetase (430 aa).

Residues 12–18 (GDEGKGK) and 40–42 (GHT) contribute to the GTP site. Asp13 serves as the catalytic Proton acceptor. Mg(2+) contacts are provided by Asp13 and Gly40. IMP-binding positions include 13–16 (DEGK), 38–41 (NAGH), Thr130, Arg144, Gln224, Thr239, and Arg303. His41 (proton donor) is an active-site residue. 299-305 (TVTGRKR) contributes to the substrate binding site. Residues Arg305, 331-333 (KLD), and 413-415 (STS) each bind GTP.

The protein belongs to the adenylosuccinate synthetase family. Homodimer. Mg(2+) is required as a cofactor.

It localises to the cytoplasm. It catalyses the reaction IMP + L-aspartate + GTP = N(6)-(1,2-dicarboxyethyl)-AMP + GDP + phosphate + 2 H(+). It functions in the pathway purine metabolism; AMP biosynthesis via de novo pathway; AMP from IMP: step 1/2. Plays an important role in the de novo pathway of purine nucleotide biosynthesis. Catalyzes the first committed step in the biosynthesis of AMP from IMP. This chain is Adenylosuccinate synthetase, found in Cereibacter sphaeroides (strain KD131 / KCTC 12085) (Rhodobacter sphaeroides).